The sequence spans 956 residues: ATPase 11, plasma membrane-type (956 aa).

Over 1 to 65 (MGDKEEVLEA…EKKESKFLKF (65 aa)) the chain is Cytoplasmic. A helical transmembrane segment spans residues 66–85 (LGFMWNPLSWVMEAAAIMAI). At 86–97 (ALANGGGKPPDW) the chain is on the extracellular side. The chain crosses the membrane as a helical span at residues 98–118 (QDFVGIITLLVINSTISFIEE). The Cytoplasmic segment spans residues 119–247 (NNAGNAAAAL…GHFQQVLTAI (129 aa)). The helical transmembrane segment at 248 to 268 (GNFCICSIAVGMIIEIVVMYP) threads the bilayer. The Extracellular segment spans residues 269 to 277 (IQHRAYRPG). A helical membrane pass occupies residues 278–295 (IDNLLVLLIGGIPIAMPT). Residues 296–647 (VLSVTMAIGS…TSRAIFQRMK (352 aa)) lie on the Cytoplasmic side of the membrane. Residue aspartate 333 is the 4-aspartylphosphate intermediate of the active site. The Mg(2+) site is built by aspartate 592 and aspartate 596. The helical transmembrane segment at 648–669 (NYTIYAVSITIRIVLGFMLLAL) threads the bilayer. Topologically, residues 670-674 (IWKFD) are extracellular. A helical transmembrane segment spans residues 675–697 (FPPFMVLIIAILNDGTIMTISKD). Topologically, residues 698-713 (RVKPSPLPDSWKLSEI) are cytoplasmic. A helical membrane pass occupies residues 714–734 (FATGVVFGSYMAMMTVIFFWA). The Extracellular portion of the chain corresponds to 735 to 759 (AYKTDFFPRTFGVSTLEKTAHDDFR). The chain crosses the membrane as a helical span at residues 760–780 (KLASAIYLQVSIISQALIFVT). At 781 to 792 (RSRSWSYVERPG) the chain is on the cytoplasmic side. Residues 793 to 813 (MLLVVAFILAQLVATLIAVYA) traverse the membrane as a helical segment. Residues 814 to 821 (NWSFAAIE) are Extracellular-facing. A helical membrane pass occupies residues 822-842 (GIGWGWAGVIWLYNIVFYIPL). The Cytoplasmic portion of the chain corresponds to 843 to 956 (DIIKFLIRYA…IETIQQAYTV (114 aa)). Threonine 889 carries the phosphothreonine modification. Serine 938 bears the Phosphoserine mark. Residues 954 to 956 (YTV) form an interaction with 14-3-3 proteins region. The residue at position 955 (threonine 955) is a Phosphothreonine.

Belongs to the cation transport ATPase (P-type) (TC 3.A.3) family. Type IIIA subfamily. Binds to 14-3-3 proteins. The binding is induced by phosphorylation of Thr-955. Binding to 14-3-3 proteins activates the H(+)-ATPase. As to expression, expressed in guard cells, mesophyll cells, leaves and roots.

Its subcellular location is the membrane. The enzyme catalyses ATP + H2O + H(+)(in) = ADP + phosphate + 2 H(+)(out). In terms of biological role, the plasma membrane H(+) ATPase of plants and fungi generates a proton gradient that drives the active transport of nutrients by H(+)-symport. The resulting external acidification and/or internal alkinization may mediate growth responses. The polypeptide is ATPase 11, plasma membrane-type (AHA11) (Arabidopsis thaliana (Mouse-ear cress)).